The sequence spans 66 residues: DNA-directed RNA polymerase subunit Rpo10 (66 aa).

Zn(2+)-binding residues include cysteine 7, cysteine 10, cysteine 47, and cysteine 48.

The protein belongs to the archaeal Rpo10/eukaryotic RPB10 RNA polymerase subunit family. Part of the RNA polymerase complex. Zn(2+) serves as cofactor.

It is found in the cytoplasm. It carries out the reaction RNA(n) + a ribonucleoside 5'-triphosphate = RNA(n+1) + diphosphate. Functionally, DNA-dependent RNA polymerase (RNAP) catalyzes the transcription of DNA into RNA using the four ribonucleoside triphosphates as substrates. The polypeptide is DNA-directed RNA polymerase subunit Rpo10 (Halobacterium salinarum (strain ATCC 29341 / DSM 671 / R1)).